Reading from the N-terminus, the 491-residue chain is Ketol-acid reductoisomerase (NADP(+)) (491 aa).

The 194-residue stretch at Ala15–Ser208 folds into the KARI N-terminal Rossmann domain. Residues Cys45–Gln48, Arg68, Arg76, Ser78, and Asp108–Gln110 contribute to the NADP(+) site. Residue His132 is part of the active site. NADP(+) is bound at residue Gly158. KARI C-terminal knotted domains lie at Ser209–Gln344 and Tyr345–Met484. 4 residues coordinate Mg(2+): Asp217, Glu221, Glu389, and Glu393. Ser414 is a binding site for substrate.

This sequence belongs to the ketol-acid reductoisomerase family. It depends on Mg(2+) as a cofactor.

It catalyses the reaction (2R)-2,3-dihydroxy-3-methylbutanoate + NADP(+) = (2S)-2-acetolactate + NADPH + H(+). The enzyme catalyses (2R,3R)-2,3-dihydroxy-3-methylpentanoate + NADP(+) = (S)-2-ethyl-2-hydroxy-3-oxobutanoate + NADPH + H(+). The protein operates within amino-acid biosynthesis; L-isoleucine biosynthesis; L-isoleucine from 2-oxobutanoate: step 2/4. Its pathway is amino-acid biosynthesis; L-valine biosynthesis; L-valine from pyruvate: step 2/4. In terms of biological role, involved in the biosynthesis of branched-chain amino acids (BCAA). Catalyzes an alkyl-migration followed by a ketol-acid reduction of (S)-2-acetolactate (S2AL) to yield (R)-2,3-dihydroxy-isovalerate. In the isomerase reaction, S2AL is rearranged via a Mg-dependent methyl migration to produce 3-hydroxy-3-methyl-2-ketobutyrate (HMKB). In the reductase reaction, this 2-ketoacid undergoes a metal-dependent reduction by NADPH to yield (R)-2,3-dihydroxy-isovalerate. This chain is Ketol-acid reductoisomerase (NADP(+)), found in Escherichia coli O7:K1 (strain IAI39 / ExPEC).